We begin with the raw amino-acid sequence, 142 residues long: ATP synthase epsilon chain (142 aa).

The protein belongs to the ATPase epsilon chain family. In terms of assembly, F-type ATPases have 2 components, CF(1) - the catalytic core - and CF(0) - the membrane proton channel. CF(1) has five subunits: alpha(3), beta(3), gamma(1), delta(1), epsilon(1). CF(0) has three main subunits: a, b and c.

The protein resides in the cell inner membrane. Produces ATP from ADP in the presence of a proton gradient across the membrane. The sequence is that of ATP synthase epsilon chain from Pasteurella multocida (strain Pm70).